Here is a 121-residue protein sequence, read N- to C-terminus: Non-specific lipid-transfer protein 3 (121 aa).

The first 28 residues, 1-28, serve as a signal peptide directing secretion; sequence MAGARRTMALVALVAVVAAAVVAERASA. Cystine bridges form between C32/C80, C42/C57, C58/C103, and C78/C117.

It belongs to the plant LTP family.

Its function is as follows. Plant non-specific lipid-transfer proteins transfer phospholipids as well as galactolipids across membranes. May play a role in wax or cutin deposition in the cell walls of expanding epidermal cells and certain secretory tissues. May possess an antifungal activity and protect the plant against pathogens. The sequence is that of Non-specific lipid-transfer protein 3 (LTP110-A) from Oryza sativa subsp. indica (Rice).